A 327-amino-acid chain; its full sequence is Undecaprenyl-phosphate 4-deoxy-4-formamido-L-arabinose transferase (327 aa).

Residues 1–235 (MFDAAPIKKV…TCLTTTPLRL (235 aa)) lie on the Cytoplasmic side of the membrane. Residues 236–256 (LSLLGSVIAIGGFSLSVLLIV) form a helical membrane-spanning segment. Topologically, residues 257–269 (LRLALGPQWAAEG) are periplasmic. Residues 270–290 (VFMLFAVLFTFIGAQFIGMGL) traverse the membrane as a helical segment. Over 291–327 (LGEYIGRIYNDVRARPRYFVQQVIYPESTSFTEESHQ) the chain is Cytoplasmic.

Belongs to the glycosyltransferase 2 family.

The protein localises to the cell inner membrane. The enzyme catalyses UDP-4-deoxy-4-formamido-beta-L-arabinose + di-trans,octa-cis-undecaprenyl phosphate = 4-deoxy-4-formamido-alpha-L-arabinopyranosyl di-trans,octa-cis-undecaprenyl phosphate + UDP. The protein operates within glycolipid biosynthesis; 4-amino-4-deoxy-alpha-L-arabinose undecaprenyl phosphate biosynthesis; 4-amino-4-deoxy-alpha-L-arabinose undecaprenyl phosphate from UDP-4-deoxy-4-formamido-beta-L-arabinose and undecaprenyl phosphate: step 1/2. It functions in the pathway bacterial outer membrane biogenesis; lipopolysaccharide biosynthesis. Catalyzes the transfer of 4-deoxy-4-formamido-L-arabinose from UDP to undecaprenyl phosphate. The modified arabinose is attached to lipid A and is required for resistance to polymyxin and cationic antimicrobial peptides. The polypeptide is Undecaprenyl-phosphate 4-deoxy-4-formamido-L-arabinose transferase (Salmonella paratyphi A (strain ATCC 9150 / SARB42)).